Here is a 317-residue protein sequence, read N- to C-terminus: Lipoyl synthase (317 aa).

The [4Fe-4S] cluster site is built by cysteine 55, cysteine 60, cysteine 66, cysteine 81, cysteine 85, cysteine 88, and serine 292. The 215-residue stretch at 67-281 folds into the Radical SAM core domain; sequence WEDREATFLI…ERYATEIGFA (215 aa).

It belongs to the radical SAM superfamily. Lipoyl synthase family. It depends on [4Fe-4S] cluster as a cofactor.

It is found in the cytoplasm. The enzyme catalyses [[Fe-S] cluster scaffold protein carrying a second [4Fe-4S](2+) cluster] + N(6)-octanoyl-L-lysyl-[protein] + 2 oxidized [2Fe-2S]-[ferredoxin] + 2 S-adenosyl-L-methionine + 4 H(+) = [[Fe-S] cluster scaffold protein] + N(6)-[(R)-dihydrolipoyl]-L-lysyl-[protein] + 4 Fe(3+) + 2 hydrogen sulfide + 2 5'-deoxyadenosine + 2 L-methionine + 2 reduced [2Fe-2S]-[ferredoxin]. The protein operates within protein modification; protein lipoylation via endogenous pathway; protein N(6)-(lipoyl)lysine from octanoyl-[acyl-carrier-protein]: step 2/2. Its function is as follows. Catalyzes the radical-mediated insertion of two sulfur atoms into the C-6 and C-8 positions of the octanoyl moiety bound to the lipoyl domains of lipoate-dependent enzymes, thereby converting the octanoylated domains into lipoylated derivatives. This Mycolicibacterium gilvum (strain PYR-GCK) (Mycobacterium gilvum (strain PYR-GCK)) protein is Lipoyl synthase.